Reading from the N-terminus, the 469-residue chain is MTNIITRFAPSPTGFLHIGSARTALFNYLFARHNNGKFFLRIEDTDKKRSTKEAIAAIFSGLKWLGINWDGEVIFQSKRNSLYKEAALKLLKEGKAYYCFTKQEEIARQRQQALKDKKHFIFNSEWRDKGPSTYPADIKPVIRLKVPREGSITIHDTLQGDIVIENSHIDDMILIRADGTATYMLAVIVDDHDMGITHIIRGDDHLTNAARQIAIYHAFGYEVPNMTHIPLIHGADGTKLSKRHGALGVEAYKDMGYLPESLCNYLLRLGWSHGDDEIISMNQAIEWFNLDSLGKSPSKLDFAKMNSINSHYLRMLDNDSLTSKTVAILKQNYKISEKEVSYIKQAMPSLIVRSATLIDLAQLAYIYLVDSPMIYNQDAKEVIKNCDKDLIKQIIANLNKLEQFDKECIQNKFKEIAIYNGLKLNDIMRPVRALITGMTASPSIFEIAETLGKENILKRLNIIYYNLNF.

Residues 10-20 carry the 'HIGH' region motif; the sequence is PSPTGFLHIGS. A 'KMSKS' region motif is present at residues 239–243; that stretch reads KLSKR. Lys-242 is an ATP binding site.

It belongs to the class-I aminoacyl-tRNA synthetase family. Glutamate--tRNA ligase type 1 subfamily. Monomer.

Its subcellular location is the cytoplasm. It carries out the reaction tRNA(Glu) + L-glutamate + ATP = L-glutamyl-tRNA(Glu) + AMP + diphosphate. Functionally, catalyzes the attachment of glutamate to tRNA(Glu) in a two-step reaction: glutamate is first activated by ATP to form Glu-AMP and then transferred to the acceptor end of tRNA(Glu). The protein is Glutamate--tRNA ligase 2 of Rickettsia typhi (strain ATCC VR-144 / Wilmington).